The sequence spans 377 residues: Killer cell immunoglobulin-like receptor 2DL4 (377 aa).

The N-terminal stretch at 1-21 (MSMSPTVIILACLGFFLDQSV) is a signal peptide. At 22–242 (WAHVGGQDKP…FKTGIARHLH (221 aa)) the chain is on the extracellular side. 2 Ig-like C2-type domains span residues 44–104 (GGHV…HPHS) and 139–202 (GENV…FHGS). Cysteine 51 and cysteine 97 are disulfide-bonded. Residues asparagine 141 and asparagine 175 are each glycosylated (N-linked (GlcNAc...) asparagine). Cysteine 146 and cysteine 195 are joined by a disulfide. Residues 243–263 (AVIRYSVAIILFTILPFFLLH) form a helical membrane-spanning segment. The Cytoplasmic segment spans residues 264–377 (RWCSKKKDAA…ASSNVPAAGI (114 aa)). The tract at residues 338-377 (PRALSPAHEHHSQALMGSSRETTALSQTQLASSNVPAAGI) is disordered. The span at 352-377 (LMGSSRETTALSQTQLASSNVPAAGI) shows a compositional bias: polar residues.

It belongs to the immunoglobulin superfamily. In terms of assembly, interacts with peptide-bound HLA-G-B2M heterotrimeric complex. Interacts with ARRB2. Expressed in decidual NK cells and innate lymphoid cell type I (ILC1). Expressed in a subset of peripheral NK cells.

Its subcellular location is the cell membrane. The protein resides in the early endosome membrane. Receptor for non-classical major histocompatibility class Ib HLA-G molecules. Recognizes HLA-G in complex with B2M/beta-2 microglobulin and a nonamer self-peptide (peptide-bound HLA-G-B2M). In decidual NK cells, binds peptide-bound HLA-G-B2M complex and triggers NK cell senescence-associated secretory phenotype as a molecular switch to promote vascular remodeling and fetal growth in early pregnancy. May play a role in balancing tolerance and antiviral-immunity at maternal-fetal interface by keeping in check the effector functions of NK, CD8+ T cells and B cells. Upon interaction with peptide-bound HLA-G-B2M, initiates signaling from the endosomal compartment leading to downstream activation of PRKDC-XRCC5 and AKT1, and ultimately triggering NF-kappa-B-dependent pro-inflammatory response. This chain is Killer cell immunoglobulin-like receptor 2DL4, found in Homo sapiens (Human).